We begin with the raw amino-acid sequence, 336 residues long: Ferredoxin--NADP reductase (336 aa).

FAD contacts are provided by T18, E37, Q45, Y50, V92, F127, D290, and S331.

It belongs to the ferredoxin--NADP reductase type 2 family. As to quaternary structure, homodimer. It depends on FAD as a cofactor.

It catalyses the reaction 2 reduced [2Fe-2S]-[ferredoxin] + NADP(+) + H(+) = 2 oxidized [2Fe-2S]-[ferredoxin] + NADPH. The sequence is that of Ferredoxin--NADP reductase from Symbiobacterium thermophilum (strain DSM 24528 / JCM 14929 / IAM 14863 / T).